The chain runs to 263 residues: MWDPDVYLAFADHRGRPFYDLVSRIGAKRARRVVDLGCGPGNLTRYLARRWPEAIIEAWDSSPQMVAAARERGIDATTGDLRTWKPKPDTDVVISSAALHWVPEHADLMVQWATELPHGSWIAVQVPGNFETPSHAVVRALARREPYAKLMRDIPFRVGAVVGSPASYAGLLMDAGCKVDAWETTYLHQLTGKNPVLEWITGTALVPVRERLDDVSWEQFRQELIPLLDDAYPPRSDGTTMFPFRRLFIVAEVGGARRSADVS.

Belongs to the methyltransferase superfamily. Tam family.

The protein resides in the cytoplasm. It carries out the reaction trans-aconitate + S-adenosyl-L-methionine = (E)-3-(methoxycarbonyl)pent-2-enedioate + S-adenosyl-L-homocysteine. Its function is as follows. Catalyzes the S-adenosylmethionine monomethyl esterification of trans-aconitate. This is Trans-aconitate 2-methyltransferase from Mycobacterium marinum (strain ATCC BAA-535 / M).